The following is a 346-amino-acid chain: Heat-inducible transcription repressor HrcA (346 aa).

The protein belongs to the HrcA family.

Its function is as follows. Negative regulator of class I heat shock genes (grpE-dnaK-dnaJ and groELS operons). Prevents heat-shock induction of these operons. The sequence is that of Heat-inducible transcription repressor HrcA from Pediococcus pentosaceus (strain ATCC 25745 / CCUG 21536 / LMG 10740 / 183-1w).